A 332-amino-acid polypeptide reads, in one-letter code: Serpentine receptor class alpha-10 (332 aa).

At 1–26 (MTSSNISICATEDQMVLQTSLLLRVN) the chain is on the extracellular side. The helical transmembrane segment at 27-47 (VILMTTVAIFTFVLTYRALFI) threads the bilayer. Residues 48 to 64 (LKQRPIFHKSTKILLYT) are Cytoplasmic-facing. The helical transmembrane segment at 65 to 85 (SLIFVNIHEIIFMVIQCVAFI) threads the bilayer. The Extracellular segment spans residues 86 to 109 (RSFTLSDKPCEIMRTTLECRFKNH). Residues 110 to 132 (VLIFGIAGMNFNQFGLTVDRLLA) form a helical membrane-spanning segment. Topologically, residues 133-146 (TVIPQTYSHLGSFP) are cytoplasmic. Residues 147–167 (GILISILVIGCSIAAPLIIAI) traverse the membrane as a helical segment. Over 168-191 (GDPYDDIVPNCFFFPQHSAPRANV) the chain is Extracellular. The chain crosses the membrane as a helical span at residues 192 to 212 (FLIILSALVIASIFLNLIIIF). Topologically, residues 213-239 (ANKKLEKGTRYYVSQRYQKREALISTR) are cytoplasmic. A helical transmembrane segment spans residues 240–260 (IIVYIAASQFLGMVLYSTIVL). Residues 261–276 (TLRLHKSMIPVSMYHN) lie on the Extracellular side of the membrane. Residues 277-297 (IVWWAYTVPFAAVALPALLIH) traverse the membrane as a helical segment. At 298–332 (RINLVGSNRKRVINRITAKVETQEEHMKSLKELWG) the chain is on the cytoplasmic side.

The protein belongs to the nematode receptor-like protein sra family.

It localises to the membrane. The protein is Serpentine receptor class alpha-10 of Caenorhabditis briggsae.